Reading from the N-terminus, the 147-residue chain is Large ribosomal subunit protein bL9 (147 aa).

This sequence belongs to the bacterial ribosomal protein bL9 family.

Functionally, binds to the 23S rRNA. The sequence is that of Large ribosomal subunit protein bL9 from Myxococcus xanthus (strain DK1622).